The following is a 284-amino-acid chain: MFIISSKNMLQKAQHAGYAVPAFNIHNLETLQVVVETAAEMRSPLIVAGTPGTFSYAGMGNIVAIAGDLAREYNLPLAIHLDHHESLADIESKVMAGIRSVMIDGSHFPFEENVALVKSVVDFCHRYDTSVEAELGRLGGIEDDLVVDSKDALYTNPQQAREFVARTGIDSLAVAIGTAHGMYAAEPKLDFERLAEIRALVDIPLVLHGASGLPESDIRQAISLGVCKVNVATELKIAFSDALKEYFLQNPKANDPRHYMQPAKQAMKEVVRKVIHVCGCEGQL.

The Proton donor role is filled by D82. Zn(2+) contacts are provided by H83 and H180. A dihydroxyacetone phosphate-binding site is contributed by G181. H208 contacts Zn(2+). Dihydroxyacetone phosphate contacts are provided by residues 209–211 (GAS) and 230–233 (NVAT).

It belongs to the class II fructose-bisphosphate aldolase family. TagBP aldolase GatY subfamily. As to quaternary structure, forms a complex with GatZ. The cofactor is Zn(2+).

It carries out the reaction D-tagatofuranose 1,6-bisphosphate = D-glyceraldehyde 3-phosphate + dihydroxyacetone phosphate. It participates in carbohydrate metabolism; D-tagatose 6-phosphate degradation; D-glyceraldehyde 3-phosphate and glycerone phosphate from D-tagatose 6-phosphate: step 2/2. In terms of biological role, catalytic subunit of the tagatose-1,6-bisphosphate aldolase GatYZ, which catalyzes the reversible aldol condensation of dihydroxyacetone phosphate (DHAP or glycerone-phosphate) with glyceraldehyde 3-phosphate (G3P) to produce tagatose 1,6-bisphosphate (TBP). Requires GatZ subunit for full activity and stability. Is involved in the catabolism of galactitol. This is D-tagatose-1,6-bisphosphate aldolase subunit GatY from Salmonella typhi.